The chain runs to 155 residues: 6,7-dimethyl-8-ribityllumazine synthase (155 aa).

Residues Trp-22, 56-58, and 80-82 each bind 5-amino-6-(D-ribitylamino)uracil; these read SFE and AVI. (2S)-2-hydroxy-3-oxobutyl phosphate is bound at residue 85-86; that stretch reads AT. The active-site Proton donor is the His-88. A 5-amino-6-(D-ribitylamino)uracil-binding site is contributed by Phe-113. Arg-127 provides a ligand contact to (2S)-2-hydroxy-3-oxobutyl phosphate.

It belongs to the DMRL synthase family.

It catalyses the reaction (2S)-2-hydroxy-3-oxobutyl phosphate + 5-amino-6-(D-ribitylamino)uracil = 6,7-dimethyl-8-(1-D-ribityl)lumazine + phosphate + 2 H2O + H(+). The protein operates within cofactor biosynthesis; riboflavin biosynthesis; riboflavin from 2-hydroxy-3-oxobutyl phosphate and 5-amino-6-(D-ribitylamino)uracil: step 1/2. In terms of biological role, catalyzes the formation of 6,7-dimethyl-8-ribityllumazine by condensation of 5-amino-6-(D-ribitylamino)uracil with 3,4-dihydroxy-2-butanone 4-phosphate. This is the penultimate step in the biosynthesis of riboflavin. The sequence is that of 6,7-dimethyl-8-ribityllumazine synthase from Chloroflexus aurantiacus (strain ATCC 29364 / DSM 637 / Y-400-fl).